Reading from the N-terminus, the 163-residue chain is Type-2 ice-structuring protein (163 aa).

The signal sequence occupies residues M1 to A17. Residues N18–S34 constitute a propeptide that is removed on maturation. Residues P39–F163 form the C-type lectin domain. 5 disulfide bridges follow: C41-C52, C69-C159, C103-C134, C123-C145, and C135-C151.

In terms of processing, the N-terminus is blocked.

It is found in the secreted. Its function is as follows. Antifreeze proteins lower the blood freezing point. In Hemitripterus americanus (Sea raven), this protein is Type-2 ice-structuring protein.